Consider the following 329-residue polypeptide: Synaptonemal complex central element protein 1 (329 aa).

Residues 1–29 (MATRPQPLGMEPEGSADLLHGPEGARGQY) form a disordered region. Coiled coils occupy residues 54–167 (RIEV…LETL) and 194–294 (KEQL…ILAH). Positions 291–329 (ILAHSTQNEEDSSWRMASPKPVEVHEETAQDQERPSSRT) are disordered. Over residues 312-329 (VEVHEETAQDQERPSSRT) the composition is skewed to basic and acidic residues.

The protein belongs to the SYCE family. In terms of assembly, homodimer. Found in a complex with SYCP1 and SYCE2. Interacts with SYCP1, SYCE2 and SYCE3. Interacts with SIX6OS1. As to expression, meiotic cells (at protein level). Expressed in the ovary and testis.

The protein resides in the nucleus. Its subcellular location is the chromosome. In terms of biological role, major component of the transverse central element of synaptonemal complexes (SCS), formed between homologous chromosomes during meiotic prophase. Requires SYCP1 in order to be incorporated into the central element. May have a role in the synaptonemal complex assembly, stabilization and recombination. The protein is Synaptonemal complex central element protein 1 (Syce1) of Mus musculus (Mouse).